Here is a 433-residue protein sequence, read N- to C-terminus: Ribonuclease T2-like (433 aa).

Intrachain disulfides connect Cys28–Cys47, Cys36–Cys95, Cys46–Cys171, and Cys103–Cys163. N-linked (GlcNAc...) asparagine glycosylation is found at Asn38 and Asn71. Residues His88, Glu156, and His160 contribute to the active site. N-linked (GlcNAc...) asparagine glycosylation is found at Asn221 and Asn263. The cysteines at positions 247 and 283 are disulfide-linked.

It belongs to the RNase T2 family.

It is found in the vacuole lumen. It localises to the cytoplasm. The catalysed reaction is a ribonucleotidyl-ribonucleotide-RNA + H2O = a 3'-end 3'-phospho-ribonucleotide-RNA + a 5'-end dephospho-ribonucleoside-RNA + H(+). Rnase which modulates cell survival under stress conditions. Released from the vacuole to the cytoplasm during stress to promote tRNA and rRNA cleavage and to activate separately a downstream pathway that promotes cell death. Involved in cell size, vacuolar morphology and growth at high temperatures and high salt concentration. The protein is Ribonuclease T2-like (RNY1) of Candida glabrata (strain ATCC 2001 / BCRC 20586 / JCM 3761 / NBRC 0622 / NRRL Y-65 / CBS 138) (Yeast).